Consider the following 139-residue polypeptide: Type II methyltransferase M.AquIB (139 aa).

Residues 1–135 (MDIKNVHIKN…KAVSEQLLDV (135 aa)) form the SAM-dependent MTase C5-type domain. Positions 38-58 (KTFGSTYRRLDPNQPSPTVTR) are disordered.

It belongs to the class I-like SAM-binding methyltransferase superfamily. C5-methyltransferase family. Heterodimer of an alpha and a beta subunit.

It carries out the reaction a 2'-deoxycytidine in DNA + S-adenosyl-L-methionine = a 5-methyl-2'-deoxycytidine in DNA + S-adenosyl-L-homocysteine + H(+). A methylase, recognizes the double-stranded sequence 5'-CYCGRG-3', methylates C-1 on both strands, and protects the DNA from cleavage by the AquI endonuclease. This chain is Type II methyltransferase M.AquIB (aquIMB), found in Picosynechococcus sp. (strain ATCC 27264 / PCC 7002 / PR-6) (Agmenellum quadruplicatum).